The sequence spans 139 residues: Large ribosomal subunit protein bL17 (139 aa).

It belongs to the bacterial ribosomal protein bL17 family. In terms of assembly, part of the 50S ribosomal subunit. Contacts protein L32.

This is Large ribosomal subunit protein bL17 from Cereibacter sphaeroides (strain ATCC 17025 / ATH 2.4.3) (Rhodobacter sphaeroides).